Consider the following 224-residue polypeptide: MNALVLGATGLCGSSFLKYASQNSGFDKVYAITRRDLPSELKTDSVVSVVSSETNKWGELIPEDATVLLTGLATTRAAAGGFENQYKIDHDMNVELAKVAKAKGYKVCVLVSSLGANENSFLPYLKLKGETERDIIALDFDKTIILRPGGLLGERNGTFKGFGDKYFSKISSCFYRSKLQSALGYPIYGDEVGKVGVKLALDSSRTEKVQIVSSPELLKLAEEK.

Belongs to the FMP52 family.

Its subcellular location is the mitochondrion outer membrane. The protein is Protein FMP52, mitochondrial (FMP52) of Kluyveromyces lactis (strain ATCC 8585 / CBS 2359 / DSM 70799 / NBRC 1267 / NRRL Y-1140 / WM37) (Yeast).